The primary structure comprises 227 residues: Cytochrome c oxidase subunit 2 (227 aa).

At 1–14 (MAYPFQLGFQDATS) the chain is on the mitochondrial intermembrane side. Residues 15–45 (PIMEELLHFHDHTLMIVFLISSLVLYIITLM) traverse the membrane as a helical segment. Residues 46–59 (LTTKLTHTSTMDAQ) are Mitochondrial matrix-facing. The chain crosses the membrane as a helical span at residues 60 to 87 (EVETVWTILPAIILILIALPSLRILYMM). Topologically, residues 88–227 (DEVNNPSLTV…FFEKWSASML (140 aa)) are mitochondrial intermembrane. Cu cation is bound by residues His-161, Cys-196, Glu-198, Cys-200, His-204, and Met-207. Residue Glu-198 participates in Mg(2+) binding.

Belongs to the cytochrome c oxidase subunit 2 family. In terms of assembly, component of the cytochrome c oxidase (complex IV, CIV), a multisubunit enzyme composed of 14 subunits. The complex is composed of a catalytic core of 3 subunits MT-CO1, MT-CO2 and MT-CO3, encoded in the mitochondrial DNA, and 11 supernumerary subunits COX4I, COX5A, COX5B, COX6A, COX6B, COX6C, COX7A, COX7B, COX7C, COX8 and NDUFA4, which are encoded in the nuclear genome. The complex exists as a monomer or a dimer and forms supercomplexes (SCs) in the inner mitochondrial membrane with NADH-ubiquinone oxidoreductase (complex I, CI) and ubiquinol-cytochrome c oxidoreductase (cytochrome b-c1 complex, complex III, CIII), resulting in different assemblies (supercomplex SCI(1)III(2)IV(1) and megacomplex MCI(2)III(2)IV(2)). Found in a complex with TMEM177, COA6, COX18, COX20, SCO1 and SCO2. Interacts with TMEM177 in a COX20-dependent manner. Interacts with COX20. Interacts with COX16. The cofactor is Cu cation.

Its subcellular location is the mitochondrion inner membrane. It catalyses the reaction 4 Fe(II)-[cytochrome c] + O2 + 8 H(+)(in) = 4 Fe(III)-[cytochrome c] + 2 H2O + 4 H(+)(out). In terms of biological role, component of the cytochrome c oxidase, the last enzyme in the mitochondrial electron transport chain which drives oxidative phosphorylation. The respiratory chain contains 3 multisubunit complexes succinate dehydrogenase (complex II, CII), ubiquinol-cytochrome c oxidoreductase (cytochrome b-c1 complex, complex III, CIII) and cytochrome c oxidase (complex IV, CIV), that cooperate to transfer electrons derived from NADH and succinate to molecular oxygen, creating an electrochemical gradient over the inner membrane that drives transmembrane transport and the ATP synthase. Cytochrome c oxidase is the component of the respiratory chain that catalyzes the reduction of oxygen to water. Electrons originating from reduced cytochrome c in the intermembrane space (IMS) are transferred via the dinuclear copper A center (CU(A)) of subunit 2 and heme A of subunit 1 to the active site in subunit 1, a binuclear center (BNC) formed by heme A3 and copper B (CU(B)). The BNC reduces molecular oxygen to 2 water molecules using 4 electrons from cytochrome c in the IMS and 4 protons from the mitochondrial matrix. The polypeptide is Cytochrome c oxidase subunit 2 (MT-CO2) (Balaenoptera musculus (Blue whale)).